The following is a 428-amino-acid chain: C4-dicarboxylate transport protein (428 aa).

A run of 9 helical transmembrane segments spans residues 4–24, 44–64, 76–96, 142–162, 184–204, 222–242, 289–309, 326–346, and 352–372; these read SLFK…ILLG, LIKM…IAGM, VALL…LIIV, IGAF…LFGF, VIFG…FGAM, LIIC…GTIA, VVGL…SIYL, IFHQ…AAGV, and IVLA…LALI.

Belongs to the dicarboxylate/amino acid:cation symporter (DAACS) (TC 2.A.23) family.

The protein localises to the cell inner membrane. Its function is as follows. Responsible for the transport of dicarboxylates such as succinate, fumarate, and malate from the periplasm across the membrane. The polypeptide is C4-dicarboxylate transport protein (Salmonella gallinarum (strain 287/91 / NCTC 13346)).